Reading from the N-terminus, the 623-residue chain is UvrABC system protein C (623 aa).

The 80-residue stretch at 21-100 (AEPGVYLMRD…IKTHQPPYNV (80 aa)) folds into the GIY-YIG domain. In terms of domain architecture, UVR spans 210–245 (DELIRELQEKMIQAAEQENYEAAARYRDQIRGLEQL).

Belongs to the UvrC family. As to quaternary structure, interacts with UvrB in an incision complex.

The protein resides in the cytoplasm. The UvrABC repair system catalyzes the recognition and processing of DNA lesions. UvrC both incises the 5' and 3' sides of the lesion. The N-terminal half is responsible for the 3' incision and the C-terminal half is responsible for the 5' incision. The polypeptide is UvrABC system protein C (Synechococcus sp. (strain JA-2-3B'a(2-13)) (Cyanobacteria bacterium Yellowstone B-Prime)).